The following is a 353-amino-acid chain: Phospho-N-acetylmuramoyl-pentapeptide-transferase (353 aa).

10 consecutive transmembrane segments (helical) span residues 24–44 (LGFF…ILWA), 66–86 (TPTM…VLCA), 88–108 (LSNL…FVGF), 129–149 (FGML…KGLD), 160–180 (PLFE…FLST), 192–212 (GLAS…VYVA), 229–249 (VGEL…FLWY), 256–276 (VFMG…NAIV), 281–301 (ILLV…ILQV), and 330–350 (KVIV…LLSL).

The protein belongs to the glycosyltransferase 4 family. MraY subfamily. The cofactor is Mg(2+).

It localises to the cell inner membrane. The catalysed reaction is UDP-N-acetyl-alpha-D-muramoyl-L-alanyl-gamma-D-glutamyl-meso-2,6-diaminopimeloyl-D-alanyl-D-alanine + di-trans,octa-cis-undecaprenyl phosphate = di-trans,octa-cis-undecaprenyl diphospho-N-acetyl-alpha-D-muramoyl-L-alanyl-D-glutamyl-meso-2,6-diaminopimeloyl-D-alanyl-D-alanine + UMP. The protein operates within cell wall biogenesis; peptidoglycan biosynthesis. Functionally, catalyzes the initial step of the lipid cycle reactions in the biosynthesis of the cell wall peptidoglycan: transfers peptidoglycan precursor phospho-MurNAc-pentapeptide from UDP-MurNAc-pentapeptide onto the lipid carrier undecaprenyl phosphate, yielding undecaprenyl-pyrophosphoryl-MurNAc-pentapeptide, known as lipid I. In Helicobacter pylori (strain J99 / ATCC 700824) (Campylobacter pylori J99), this protein is Phospho-N-acetylmuramoyl-pentapeptide-transferase.